Consider the following 223-residue polypeptide: Putative archaetidylserine decarboxylase proenzyme (223 aa).

The active-site Schiff-base intermediate with substrate; via pyruvic acid is Ser183. The residue at position 183 (Ser183) is a Pyruvic acid (Ser); by autocatalysis.

The protein belongs to the phosphatidylserine decarboxylase family. PSD-A subfamily. As to quaternary structure, heterodimer of a large membrane-associated beta subunit and a small pyruvoyl-containing alpha subunit. It depends on pyruvate as a cofactor. Is synthesized initially as an inactive proenzyme. Formation of the active enzyme involves a self-maturation process in which the active site pyruvoyl group is generated from an internal serine residue via an autocatalytic post-translational modification. Two non-identical subunits are generated from the proenzyme in this reaction, and the pyruvate is formed at the N-terminus of the alpha chain, which is derived from the carboxyl end of the proenzyme. The post-translation cleavage follows an unusual pathway, termed non-hydrolytic serinolysis, in which the side chain hydroxyl group of the serine supplies its oxygen atom to form the C-terminus of the beta chain, while the remainder of the serine residue undergoes an oxidative deamination to produce ammonia and the pyruvoyl prosthetic group on the alpha chain.

The protein localises to the cell membrane. It catalyses the reaction archaetidylserine + H(+) = archaetidylethanolamine + CO2. Catalyzes the formation of archaetidylethanolamine (PtdEtn) from archaetidylserine (PtdSer). In Methanothermobacter thermautotrophicus (strain ATCC 29096 / DSM 1053 / JCM 10044 / NBRC 100330 / Delta H) (Methanobacterium thermoautotrophicum), this protein is Putative archaetidylserine decarboxylase proenzyme.